Reading from the N-terminus, the 417-residue chain is Phosphoglycerate kinase 2 (417 aa).

N-acetylserine is present on Ser2. Phosphoserine occurs at positions 2 and 4. At Lys11 the chain carries N6-acetyllysine. 6 residues coordinate (2R)-3-phosphoglycerate: Val23, Asp24, Phe25, Asn26, Gln38, and Arg39. An N6-acetyllysine modification is found at Lys48. The (2R)-3-phosphoglycerate site is built by Ser62, His63, Gly65, and Arg66. Lys75, Lys86, and Lys97 each carry N6-acetyllysine. (2R)-3-phosphoglycerate-binding residues include Leu122 and Arg123. Lys131 and Lys146 each carry N6-acetyllysine. (2R)-3-phosphoglycerate is bound by residues His170 and Arg171. Phosphotyrosine is present on Tyr196. Lys199 carries the N6-acetyllysine modification. Gly214 contributes to the ADP binding site. Gly214 provides a ligand contact to CDP. AMP is bound by residues Ala215 and Lys216. Ala215 contacts ATP. Position 215 (Ala215) interacts with Mg(2+). Mg(2+)-binding residues include Ala218 and Asp219. Asp219 is a CDP binding site. Residue Lys220 coordinates AMP. Residue Lys220 coordinates ATP. Gly238 provides a ligand contact to ADP. Gly238 is a binding site for CDP. Gly239 provides a ligand contact to AMP. Gly239 contacts ATP. 2 positions are modified to N6-acetyllysine: Lys267 and Lys291. Residue Gly313 coordinates AMP. Position 313 (Gly313) interacts with ATP. Residues Gly338, Val340, and Phe343 each coordinate CDP. Position 343 (Phe343) interacts with ADP. Glu344 provides a ligand contact to AMP. Positions 344, 375, and 376 each coordinate ATP. Asp375 is a binding site for Mg(2+).

The protein belongs to the phosphoglycerate kinase family. Monomer. Mg(2+) serves as cofactor.

The protein localises to the cytoplasm. The enzyme catalyses (2R)-3-phosphoglycerate + ATP = (2R)-3-phospho-glyceroyl phosphate + ADP. It participates in carbohydrate degradation; glycolysis; pyruvate from D-glyceraldehyde 3-phosphate: step 2/5. In terms of biological role, essential for sperm motility and male fertility but is not required for the completion of spermatogenesis. This chain is Phosphoglycerate kinase 2 (PGK2), found in Equus caballus (Horse).